The sequence spans 435 residues: Methylenetetrahydrofolate--tRNA-(uracil-5-)-methyltransferase TrmFO (435 aa).

7–12 (GAGLAG) is a binding site for FAD.

It belongs to the MnmG family. TrmFO subfamily. FAD is required as a cofactor.

The protein localises to the cytoplasm. It catalyses the reaction uridine(54) in tRNA + (6R)-5,10-methylene-5,6,7,8-tetrahydrofolate + NADH + H(+) = 5-methyluridine(54) in tRNA + (6S)-5,6,7,8-tetrahydrofolate + NAD(+). The catalysed reaction is uridine(54) in tRNA + (6R)-5,10-methylene-5,6,7,8-tetrahydrofolate + NADPH + H(+) = 5-methyluridine(54) in tRNA + (6S)-5,6,7,8-tetrahydrofolate + NADP(+). Catalyzes the folate-dependent formation of 5-methyl-uridine at position 54 (M-5-U54) in all tRNAs. In Thermotoga neapolitana (strain ATCC 49049 / DSM 4359 / NBRC 107923 / NS-E), this protein is Methylenetetrahydrofolate--tRNA-(uracil-5-)-methyltransferase TrmFO.